The primary structure comprises 115 residues: NADH-ubiquinone oxidoreductase chain 3 (115 aa).

3 consecutive transmembrane segments (helical) span residues Leu-4 to Leu-24, Phe-55 to Leu-75, and Val-86 to Trp-106.

It belongs to the complex I subunit 3 family. Core subunit of respiratory chain NADH dehydrogenase (Complex I) which is composed of 45 different subunits. Interacts with TMEM186. Interacts with TMEM242.

Its subcellular location is the mitochondrion inner membrane. The enzyme catalyses a ubiquinone + NADH + 5 H(+)(in) = a ubiquinol + NAD(+) + 4 H(+)(out). Core subunit of the mitochondrial membrane respiratory chain NADH dehydrogenase (Complex I) which catalyzes electron transfer from NADH through the respiratory chain, using ubiquinone as an electron acceptor. Essential for the catalytic activity of complex I. The protein is NADH-ubiquinone oxidoreductase chain 3 of Isthmomys pirrensis (Mount Pirri Isthmus rat).